We begin with the raw amino-acid sequence, 460 residues long: Beta-1,3-xylanase TXYA (460 aa).

Positions 1–22 (MKKLAKMISVATLGACAFQAHA) are cleaved as a signal peptide. The GH26 domain maps to 23 to 337 (LDGKLVPDQG…LSDPKFIRHS (315 aa)). Residue E138 is the Proton donor of the active site. Residue E234 is the Nucleophile of the active site. Residues 347–371 (GNSDGGNGGDNGGDNGGDNGGETPE) form a disordered region. Residues 348–366 (NSDGGNGGDNGGDNGGDNG) are compositionally biased toward gly residues. The carbohydrate binding module (CBM) stretch occupies residues 368-460 (ETPENCTDDF…TVTFTNQVCN (93 aa)). 2 disulfide bridges follow: C373–C459 and C404–C409.

It belongs to the glycosyl hydrolase 26 family.

The catalysed reaction is Random hydrolysis of (1-&gt;3)-beta-D-glycosidic linkages in (1-&gt;3)-beta-D-xylans.. Its activity is regulated as follows. Completely inhibited by Cu(2+), Hg(2+) and N-bromosuccinimide. Strongly inhibited by Ag(+), Zn(2+) and Pb(2+). Moderately inhibited by Fe(3+), Al(3+), Mn(2+), dithiothreitol and p-chloromercuribenzoic acid. Slightly activated by Mg(2+) and Ca(2+). Unaffected by Na(+), K(+), Ba(2+), EDTA, iodoacetic acid and N-ethylmalaimide. Its function is as follows. Catalyzes the hydrolysis of beta-1,3-xylan into oligosaccharides, mainly xylotriose and xylobiose with smaller amounts of xylotetraose, xylose, xylopentaose and xylohexaose. Weakly active toward beta-1,3-xylotriose, yielding xylose and xylobiose. Converts beta-1,3-xylotetraose into xylotriose, xylobiose and xylose. Converts beta-1,3-xylopentaose into xylotetraose, xylotriose, xylobiose and xylose. Does not hydrolyze xylobiose, p-nitrophenyl-beta-xyloside, beta-1,4-xylan, curdlan or carboxymethylcellulose. The sequence is that of Beta-1,3-xylanase TXYA from Vibrio sp.